We begin with the raw amino-acid sequence, 512 residues long: Protein male-specific lethal-3 (512 aa).

One can recognise a Chromo domain in the interval 11 to 90 (FHKGEIVLCY…QLQRELAEAA (80 aa)). The disordered stretch occupies residues 98–175 (YSYKGTPDKP…DGRLKGNRGR (78 aa)). A compositionally biased stretch (basic and acidic residues) spans 149-169 (RTRDNSGGKRKEKPPSGDGRL). Residues 196-500 (QEDRIMMRVS…STALPQEDLQ (305 aa)) form the MRG domain.

Component of the male-specific lethal (MSL) histone acetyltransferase complex, composed of mof, mle, msl-1, msl-2 and msl-3 proteins, as well as roX1 and roX2 non-coding RNAs. Component of a maternal MSL subcomplex composed of mof, msl-1 and msl-3. Ubiquitinated by msl-2.

It is found in the nucleus. The protein resides in the chromosome. Functionally, component of the male-specific lethal (MSL) histone acetyltransferase complex, a multiprotein complex essential for elevating transcription of the single X chromosome in the male (X chromosome dosage compensation). The MSL complex specifically associates with the single X chromosome in males and mediates formation of H4K16ac, promoting a two-fold activation of X chromosome. Acts as a histone reader that specifically recognizes and binds histone H3 trimethylated at 'Lys-36' (H3K36me3) and histone H4 monomethylated at 'Lys-20' (H4K20me1). Within the MSL complex, mediates the spreading of the MSL complex from initiation sites on the male X chromosome to flanking chromatin. Following initial recruitment of the MSL complex to male X chromosome by msl-2, msl-3 binds H3K36me3 and promotes spreading of the MSL complex in cis. In addition to its role in dosage compensation in males, promotes germline stem cell differentiation in females: recognizes and binds H3K36me3, promoting recruitment of the ATAC complex and transcription of genes, such as RpS19b. The sequence is that of Protein male-specific lethal-3 from Drosophila melanogaster (Fruit fly).